The primary structure comprises 134 residues: Small ribosomal subunit protein uS11 (134 aa).

The protein belongs to the universal ribosomal protein uS11 family. As to quaternary structure, part of the 30S ribosomal subunit. Interacts with proteins S7 and S18. Binds to IF-3.

Functionally, located on the platform of the 30S subunit, it bridges several disparate RNA helices of the 16S rRNA. Forms part of the Shine-Dalgarno cleft in the 70S ribosome. The polypeptide is Small ribosomal subunit protein uS11 (Frankia casuarinae (strain DSM 45818 / CECT 9043 / HFP020203 / CcI3)).